A 184-amino-acid polypeptide reads, in one-letter code: Der GTPase-activating protein YihI (184 aa).

Disordered regions lie at residues 1–106 (MNRP…PTMS) and 159–184 (LGDD…KDAL). Residues 8-32 (VADKAEKSKVKRKTREELEREARER) are compositionally biased toward basic and acidic residues. The span at 159-169 (LGDDDEEEQQE) shows a compositional bias: acidic residues.

This sequence belongs to the YihI family. As to quaternary structure, interacts with Der.

Functionally, a GTPase-activating protein (GAP) that modifies Der/EngA GTPase function. May play a role in ribosome biogenesis. This Pectobacterium atrosepticum (strain SCRI 1043 / ATCC BAA-672) (Erwinia carotovora subsp. atroseptica) protein is Der GTPase-activating protein YihI.